Consider the following 1252-residue polypeptide: Calmodulin-regulated spectrin-associated protein 3 (1252 aa).

Disordered regions lie at residues 183–205, 331–385, 429–457, 479–604, 638–697, 712–935, 962–981, 996–1030, and 1063–1114; these read KTEQ…SPAQ, HAVS…SMSH, SVSS…ESGD, GAAD…MSEL, FLQV…LGDY, QRDM…EAAR, TTRA…GDFT, DLDK…DDSA, and PNNL…TGPR. Threonine 184 bears the Phosphothreonine mark. Phosphoserine is present on serine 193. In terms of domain architecture, Calponin-homology (CH) spans 203–312; it reads PAQPSIRYRK…LVVLLAEMYM (110 aa). Phosphoserine is present on residues serine 334, serine 347, serine 351, serine 368, serine 373, and serine 382. The span at 335 to 353 shows a compositional bias: polar residues; sequence PRNTETVPSQNNSGSSSPV. A compositionally biased stretch (low complexity) spans 359 to 373; sequence PLLSPGGPQSPLRGS. 3 stretches are compositionally biased toward polar residues: residues 374 to 383, 441 to 450, and 525 to 534; these read TGSLKSSPSM, VSTSSRNSAQ, and ENPSKSSPCS. Phosphoserine is present on residues serine 548, serine 555, and serine 561. Positions 569 to 580 are enriched in basic and acidic residues; the sequence is AERKKQLVKAEA. A coiled-coil region spans residues 595-629; the sequence is EALSSEMSELGARLEEKRRAIEAQKRRIEAIFAKH. Phosphoserine is present on serine 683. A coiled-coil region spans residues 696–727; that stretch reads DYNRAVSKLSAALSSLQRDMQRLTDQQQRLLA. A compositionally biased stretch (pro residues) spans 729–739; that stretch reads PEAPGPAPPPA. Positions 740–768 are enriched in low complexity; it reads AWVIPGPATGPKAASPSPARRAPAARRSP. Serine 767 bears the Phosphoserine mark. Phosphothreonine is present on threonine 797. 2 positions are modified to phosphoserine: serine 812 and serine 881. Polar residues predominate over residues 812 to 825; that stretch reads SPSQVPVQTRSSIL. The span at 887 to 934 shows a compositional bias: basic and acidic residues; sequence YKDEDKPEDEMAQKRASLLERQQRRVEEARRRKQWQEAEKEQKREEAA. The stretch at 896-943 forms a coiled coil; that stretch reads EMAQKRASLLERQQRRVEEARRRKQWQEAEKEQKREEAARLAQEAPGL. Serine 1077 is modified (phosphoserine). In terms of domain architecture, CKK spans 1112–1246; it reads GPRLYKEPSA…QSKKPTTPKK (135 aa).

Belongs to the CAMSAP1 family. In terms of assembly, interacts with PLEKHA7. Interacts with CAMSAP2. Interacts with KATNA1 and KATNB1; leading to regulate the length of CAMSAP3-decorated microtubule stretches. Interacts with AKAP9; regulating Golgi assembly in epithelial cells. Interacts with MACF1. Interacts with isoform C of CDH23; leading to inhibit CAMSAP3 ability to induce microtubule bundle formation. Interacts with AKNA. In terms of tissue distribution, expressed at the apical surface of respiratory epithelia, as well as in the acini of submucosal glands (at protein level). In cochlea, restricted to the organ of Corti and increases during development (at protein level). Highly expressed in both sensory hair cells and supporting cells.

The protein resides in the cytoplasm. Its subcellular location is the cytoskeleton. The protein localises to the cell junction. It is found in the adherens junction. It localises to the cilium axoneme. The protein resides in the cilium basal body. In terms of biological role, key microtubule-organizing protein that specifically binds the minus-end of non-centrosomal microtubules and regulates their dynamics and organization. Specifically recognizes growing microtubule minus-ends and autonomously decorates and stabilizes microtubule lattice formed by microtubule minus-end polymerization. Acts on free microtubule minus-ends that are not capped by microtubule-nucleating proteins or other factors and protects microtubule minus-ends from depolymerization. In addition, it also reduces the velocity of microtubule polymerization. Required for the biogenesis and the maintenance of zonula adherens by anchoring the minus-end of microtubules to zonula adherens and by recruiting the kinesin KIFC3 to those junctional sites. Required for orienting the apical-to-basal polarity of microtubules in epithelial cells: acts by tethering non-centrosomal microtubules to the apical cortex, leading to their longitudinal orientation. Plays a key role in early embryos, which lack centrosomes: accumulates at the microtubule bridges that connect pairs of cells and enables the formation of a non-centrosomal microtubule-organizing center that directs intracellular transport in the early embryo. Couples non-centrosomal microtubules with actin: interaction with MACF1 at the minus ends of non-centrosomal microtubules, tethers the microtubules to actin filaments, regulating focal adhesion size and cell migration. Plays a key role in the generation of non-centrosomal microtubules by accumulating in the pericentrosomal region and cooperating with KATNA1 to release non-centrosomal microtubules from the centrosome. Through the microtubule cytoskeleton, also regulates the organization of cellular organelles including the Golgi and the early endosomes. Through interaction with AKAP9, involved in translocation of Golgi vesicles in epithelial cells, where microtubules are mainly non-centrosomal. Plays an important role in motile cilia function by facilitatating proper orientation of basal bodies and formation of central microtubule pairs in motile cilia. The chain is Calmodulin-regulated spectrin-associated protein 3 from Mus musculus (Mouse).